Reading from the N-terminus, the 502-residue chain is ATP synthase subunit alpha (502 aa).

Residues 115–139 (VDGLGPVETTETRPIESPAPGVMDR) form a disordered region. 169 to 176 (GDRQTGKT) lines the ATP pocket.

It belongs to the ATPase alpha/beta chains family. F-type ATPases have 2 components, CF(1) - the catalytic core - and CF(0) - the membrane proton channel. CF(1) has five subunits: alpha(3), beta(3), gamma(1), delta(1), epsilon(1). CF(0) has three main subunits: a(1), b(2) and c(9-12). The alpha and beta chains form an alternating ring which encloses part of the gamma chain. CF(1) is attached to CF(0) by a central stalk formed by the gamma and epsilon chains, while a peripheral stalk is formed by the delta and b chains.

It is found in the cell membrane. It carries out the reaction ATP + H2O + 4 H(+)(in) = ADP + phosphate + 5 H(+)(out). Its function is as follows. Produces ATP from ADP in the presence of a proton gradient across the membrane. The alpha chain is a regulatory subunit. This Geobacillus thermodenitrificans (strain NG80-2) protein is ATP synthase subunit alpha.